A 60-amino-acid chain; its full sequence is Three-finger toxin MS3 (60 aa).

Disulfide bonds link Cys3/Cys22, Cys15/Cys39, Cys41/Cys52, and Cys53/Cys58.

This sequence belongs to the three-finger toxin family. Short-chain subfamily. Type I alpha-neurotoxin sub-subfamily. Expressed by the venom gland.

The protein resides in the secreted. Its function is as follows. Produces peripheral paralysis by blocking neuromuscular transmission at the postsynaptic site. Binds to and inhibits the endogenous nicotinic acetylcholine receptors (nAChR) in human rhabdomyosarcoma TE 671 cell line with an IC(50) of 346 mM. This neurotoxin is lethal to mice by intraperitoneal injection and to zebrafish by injection at the back of the dorsolateral region. This chain is Three-finger toxin MS3, found in Micrurus surinamensis (Surinam coral snake).